The chain runs to 526 residues: Probable feruloyl esterase B-1 (526 aa).

The first 19 residues, 1–19 (MPSLRRLLPFLAAGSAALA), serve as a signal peptide directing secretion. Disulfide bonds link Cys-28–Cys-75 and Cys-63–Cys-114. Asn-53, Asn-85, Asn-98, and Asn-138 each carry an N-linked (GlcNAc...) asparagine glycan. 3 disulfide bridges follow: Cys-187-Cys-441, Cys-256-Cys-273, and Cys-282-Cys-291. Ser-188 (acyl-ester intermediate) is an active-site residue. Asn-246 is a glycosylation site (N-linked (GlcNAc...) asparagine). Ca(2+) contacts are provided by Asp-257, Asp-260, Ala-262, Asp-264, and Ile-266. N-linked (GlcNAc...) asparagine glycosylation is found at Asn-287 and Asn-311. Residues Asp-400 and His-440 each act as charge relay system in the active site. N-linked (GlcNAc...) asparagine glycosylation is found at Asn-490 and Asn-516. Cys-503 and Cys-525 are disulfide-bonded.

Belongs to the tannase family.

It is found in the secreted. The enzyme catalyses feruloyl-polysaccharide + H2O = ferulate + polysaccharide.. In terms of biological role, involved in degradation of plant cell walls. Hydrolyzes the feruloyl-arabinose ester bond in arabinoxylans as well as the feruloyl-galactose and feruloyl-arabinose ester bonds in pectin. The sequence is that of Probable feruloyl esterase B-1 (faeB-1) from Aspergillus flavus (strain ATCC 200026 / FGSC A1120 / IAM 13836 / NRRL 3357 / JCM 12722 / SRRC 167).